Here is a 96-residue protein sequence, read N- to C-terminus: Aspartyl/glutamyl-tRNA(Asn/Gln) amidotransferase subunit C (96 aa).

Belongs to the GatC family. In terms of assembly, heterotrimer of A, B and C subunits.

It carries out the reaction L-glutamyl-tRNA(Gln) + L-glutamine + ATP + H2O = L-glutaminyl-tRNA(Gln) + L-glutamate + ADP + phosphate + H(+). The catalysed reaction is L-aspartyl-tRNA(Asn) + L-glutamine + ATP + H2O = L-asparaginyl-tRNA(Asn) + L-glutamate + ADP + phosphate + 2 H(+). In terms of biological role, allows the formation of correctly charged Asn-tRNA(Asn) or Gln-tRNA(Gln) through the transamidation of misacylated Asp-tRNA(Asn) or Glu-tRNA(Gln) in organisms which lack either or both of asparaginyl-tRNA or glutaminyl-tRNA synthetases. The reaction takes place in the presence of glutamine and ATP through an activated phospho-Asp-tRNA(Asn) or phospho-Glu-tRNA(Gln). The polypeptide is Aspartyl/glutamyl-tRNA(Asn/Gln) amidotransferase subunit C (Acaryochloris marina (strain MBIC 11017)).